We begin with the raw amino-acid sequence, 514 residues long: Lysine--tRNA ligase (514 aa).

Residues Glu424 and Glu431 each contribute to the Mg(2+) site.

The protein belongs to the class-II aminoacyl-tRNA synthetase family. As to quaternary structure, homodimer. It depends on Mg(2+) as a cofactor.

It localises to the cytoplasm. The catalysed reaction is tRNA(Lys) + L-lysine + ATP = L-lysyl-tRNA(Lys) + AMP + diphosphate. This is Lysine--tRNA ligase from Cupriavidus necator (strain ATCC 17699 / DSM 428 / KCTC 22496 / NCIMB 10442 / H16 / Stanier 337) (Ralstonia eutropha).